The following is a 331-amino-acid chain: Ferredoxin--NADP reductase 2 (331 aa).

7 residues coordinate FAD: Glu-37, Gln-45, Tyr-50, Val-90, Phe-124, Asp-285, and Thr-326.

Belongs to the ferredoxin--NADP reductase type 2 family. In terms of assembly, homodimer. Requires FAD as cofactor.

It catalyses the reaction 2 reduced [2Fe-2S]-[ferredoxin] + NADP(+) + H(+) = 2 oxidized [2Fe-2S]-[ferredoxin] + NADPH. This Bacillus velezensis (strain DSM 23117 / BGSC 10A6 / LMG 26770 / FZB42) (Bacillus amyloliquefaciens subsp. plantarum) protein is Ferredoxin--NADP reductase 2.